The sequence spans 277 residues: Tryptophan synthase alpha chain (277 aa).

Residues E50 and D61 each act as proton acceptor in the active site.

This sequence belongs to the TrpA family. In terms of assembly, tetramer of two alpha and two beta chains.

The enzyme catalyses (1S,2R)-1-C-(indol-3-yl)glycerol 3-phosphate + L-serine = D-glyceraldehyde 3-phosphate + L-tryptophan + H2O. The protein operates within amino-acid biosynthesis; L-tryptophan biosynthesis; L-tryptophan from chorismate: step 5/5. Its function is as follows. The alpha subunit is responsible for the aldol cleavage of indoleglycerol phosphate to indole and glyceraldehyde 3-phosphate. The protein is Tryptophan synthase alpha chain of Beijerinckia indica subsp. indica (strain ATCC 9039 / DSM 1715 / NCIMB 8712).